Reading from the N-terminus, the 275-residue chain is MALLKSKPTSPGKRGEIRVVHHHIYKGKPHAALVEKLKKTGGRNNQGRITVRHIGGGQRQKYRIIDFKRNKDGILGRVERLEYDPNRTALIALISYKDGEKRYIIAPSNLEVGATIQSGADSPISVGNCLPLKNIPVGTTIHCVEMKPGKGAQMLRSAGCSGQLVAKEGVYATLRLRSGEMRKIHVLCRAVIGEVSNSEHNLRALGKAGAKRWRGIRPTVRGVAMNPVDHPHGGGEGRTSGGRHPVSPWGLPTKGYKTRSNKRTDTFIVRGRKKK.

A disordered region spans residues 223 to 260; sequence VAMNPVDHPHGGGEGRTSGGRHPVSPWGLPTKGYKTRS.

Belongs to the universal ribosomal protein uL2 family. As to quaternary structure, part of the 50S ribosomal subunit. Forms a bridge to the 30S subunit in the 70S ribosome.

One of the primary rRNA binding proteins. Required for association of the 30S and 50S subunits to form the 70S ribosome, for tRNA binding and peptide bond formation. It has been suggested to have peptidyltransferase activity; this is somewhat controversial. Makes several contacts with the 16S rRNA in the 70S ribosome. In Legionella pneumophila (strain Lens), this protein is Large ribosomal subunit protein uL2.